Here is a 161-residue protein sequence, read N- to C-terminus: S-protein homolog 2 (161 aa).

The signal sequence occupies residues 1-24 (MDIPKQYLSLFILIIFITTKLSQA). N-linked (GlcNAc...) asparagine glycosylation is found at Asn75, Asn106, and Asn157.

This sequence belongs to the plant self-incompatibility (S1) protein family.

Its subcellular location is the secreted. In Arabidopsis thaliana (Mouse-ear cress), this protein is S-protein homolog 2.